A 962-amino-acid chain; its full sequence is Putative primase C962R (962 aa).

The region spanning 607–775 (ELDARLWIMF…PDPNNSYEKK (169 aa)) is the SF3 helicase domain. 636–643 (GGGCNGKT) lines the ATP pocket.

The protein belongs to the asfivirus helicase C962R family.

The polypeptide is Putative primase C962R (African swine fever virus (isolate Warthog/Namibia/Wart80/1980) (ASFV)).